The primary structure comprises 858 residues: Leucine--tRNA ligase (858 aa).

Residues 42–52 (PYPSGNLHMGH) carry the 'HIGH' region motif. Positions 584 to 594 (NPNRSDSSRYI) are enriched in polar residues. Residues 584-611 (NPNRSDSSRYIPSNLVDPNDPKDPETGE) are disordered. Residues 619 to 623 (TMSKS) carry the 'KMSKS' region motif. Lys622 contacts ATP.

The protein belongs to the class-I aminoacyl-tRNA synthetase family.

The protein resides in the cytoplasm. The catalysed reaction is tRNA(Leu) + L-leucine + ATP = L-leucyl-tRNA(Leu) + AMP + diphosphate. In Cyanothece sp. (strain PCC 7425 / ATCC 29141), this protein is Leucine--tRNA ligase.